Reading from the N-terminus, the 1118-residue chain is Pleckstrin homology domain-containing family A member 7 (1118 aa).

WW domains are found at residues 8–41 (DTLPEHWSYGVCRDGRVFFINDQLRCTTWLHPRT) and 53–86 (SDLPRGWEEGFTEEGASFFIDHNQQTTTFRHPVT). The segment covering 100-113 (EEPHPHMSKPERNQ) has biased composition (basic and acidic residues). The tract at residues 100–145 (EEPHPHMSKPERNQRPSSMVSETSTAGTTSTLEAKPGPKIVKSSSK) is disordered. The span at 114 to 131 (RPSSMVSETSTAGTTSTL) shows a compositional bias: polar residues. The PH domain maps to 163–281 (PVVVRGWLHK…WVRAMNQAAQ (119 aa)). Composition is skewed to basic and acidic residues over residues 334–355 (FNRREQEEERFRAQRDPLEGRR) and 434–443 (HWTKAQKGDG). 2 disordered regions span residues 334 to 512 (FNRR…RRAH) and 528 to 629 (QFRH…RRSM). Over residues 452–481 (LPRQGPSQPLSFPENYQSLPKSTRHLSGSS) the composition is skewed to polar residues. The span at 494 to 512 (YAQDRASHLKMSSEERRAH) shows a compositional bias: basic and acidic residues. Residues Ser-533, Ser-542, Ser-566, Ser-601, Ser-605, and Ser-609 each carry the phosphoserine modification. The interval 535–693 (TAPIGAGSPE…AESDIDVKLS (159 aa)) is interaction with CTNND1. Pro residues predominate over residues 564-579 (PPSPSDIPPPGPPRPF). Over residues 586–602 (TPAERVTVKPPEQRRSV) the composition is skewed to basic and acidic residues. The stretch at 697-798 (EQDRILQDLE…LQEQHRRAFF (102 aa)) forms a coiled coil. Disordered regions lie at residues 839–873 (KTVPLFPHPSVPSLSPTESKPALQPSPPTSPVRTP) and 886–968 (VPYR…EQGQ). Phosphoserine occurs at positions 857 and 864. Thr-867 bears the Phosphothreonine mark. Ser-868, Ser-900, and Ser-904 each carry phosphoserine. Residues 930-939 (DQPPAVPPLP) show a composition bias toward pro residues. Positions 955–966 (RQSDERKRDREQ) are enriched in basic and acidic residues. 2 positions are modified to phosphoserine: Ser-983 and Leu-990. Residues 1003 to 1024 (GSESRYQTLPGRGLSGSTSRLQ) are disordered. The stretch at 1064–1091 (QRGKMSAEEQLERMKRHQKALVRERKRT) forms a coiled coil.

As to quaternary structure, interacts with CAMSAP3 and CTNND1. Interacts (via WW domains) with TSPAN33 (via cytoplasmic domain) and with PDZD11; the interaction with TSPAN33 is dependent on PDZD11 being bound to PLEKHA7 and facilitates the docking of ADAM10 to zonula adherens through interaction of TSPAN33 with ADAM10. Expressed in kidney and lung (at protein level).

It is found in the cell junction. The protein resides in the adherens junction. It localises to the cytoplasm. Its subcellular location is the cytoskeleton. The protein localises to the microtubule organizing center. It is found in the centrosome. In terms of biological role, required for zonula adherens biogenesis and maintenance. Acts via its interaction with CAMSAP3, which anchors microtubules at their minus-ends to zonula adherens, leading to the recruitment of KIFC3 kinesin to the junctional site. Mediates docking of ADAM10 to zonula adherens through a PDZD11-dependent interaction with the ADAM10-binding protein TSPAN33. In Mus musculus (Mouse), this protein is Pleckstrin homology domain-containing family A member 7 (Plekha7).